The chain runs to 22 residues: GRCCDVPNACSGRWCRDHAQCC.

Intrachain disulfides connect Cys3-Cys15, Cys4-Cys21, and Cys10-Cys22. Cys22 carries the post-translational modification Cysteine amide.

Belongs to the conotoxin M superfamily. In terms of tissue distribution, expressed by the venom duct. Has not been isolated from the crude venom.

It is found in the secreted. Functionally, mu-conotoxins block voltage-gated sodium channels (Nav). This synthetic toxin moderately blocks rNav1.1/SCN1A, rNav1.2/SCN2A, rNav1.3/SCN3A, rNav1.4/SCN4A, rNav1.5/SCN5A, and mNav1.6/SCN8A. This block is very slowly reversible. Causes seizures when injected intracranially into mice. The polypeptide is Mu-conotoxin CnIIIA (Conus consors (Singed cone)).